Reading from the N-terminus, the 323-residue chain is Beta-ketoacyl-[acyl-carrier-protein] synthase III (323 aa).

Catalysis depends on residues C114 and H250. An ACP-binding region spans residues 251 to 255 (QANIR). Residue N280 is part of the active site.

Belongs to the thiolase-like superfamily. FabH family. As to quaternary structure, homodimer.

It localises to the cytoplasm. It catalyses the reaction malonyl-[ACP] + acetyl-CoA + H(+) = 3-oxobutanoyl-[ACP] + CO2 + CoA. The protein operates within lipid metabolism; fatty acid biosynthesis. Its function is as follows. Catalyzes the condensation reaction of fatty acid synthesis by the addition to an acyl acceptor of two carbons from malonyl-ACP. Catalyzes the first condensation reaction which initiates fatty acid synthesis and may therefore play a role in governing the total rate of fatty acid production. Possesses both acetoacetyl-ACP synthase and acetyl transacylase activities. Its substrate specificity determines the biosynthesis of branched-chain and/or straight-chain of fatty acids. This is Beta-ketoacyl-[acyl-carrier-protein] synthase III from Alkalilimnicola ehrlichii (strain ATCC BAA-1101 / DSM 17681 / MLHE-1).